Reading from the N-terminus, the 173-residue chain is T-cell surface glycoprotein CD3 gamma chain (173 aa).

Residues 1–22 (MEQGKHLAGLILAVFLLQGTMA) form the signal peptide. The Extracellular segment spans residues 23–111 (HVKEVKVDDN…NCIELNPSTV (89 aa)). An Ig-like domain is found at 24-94 (VKEVKVDDNR…GSNNQSKSLQ (71 aa)). The cysteines at positions 42 and 83 are disulfide-linked. 2 N-linked (GlcNAc...) asparagine glycosylation sites follow: asparagine 45 and asparagine 88. Residues 112–132 (AGFIFTEIVSIFLLAVGVYFI) form a helical membrane-spanning segment. Topologically, residues 133-173 (AGQEGVRQSRASDKQTLLNNDQLYQPLKEREDDQYSHLRKN) are cytoplasmic. Serine 141 carries the phosphoserine modification. Serine 144 carries the phosphoserine; by PKC modification. Residues 145-173 (DKQTLLNNDQLYQPLKEREDDQYSHLRKN) form the ITAM domain. A Di-leucine motif motif is present at residues 149–150 (LL).

In terms of assembly, the TCR-CD3 complex is composed of a CD3D/CD3E and a CD3G/CD3E heterodimers that preferentially associate with TCRalpha and TCRbeta, respectively, to form TCRalpha/CD3E/CD3G and TCRbeta/CD3G/CD3E trimers. In turn, the hexamer interacts with CD3Z homodimer to form the TCR-CD3 complex. Alternatively, TCRalpha and TCRbeta can be replaced by TCRgamma and TCRdelta. Phosphorylated on Tyr residues after T-cell receptor triggering by LCK in association with CD4/CD8. Phosphorylated also by PKC; leading to the TCR complex down-regulation. Post-translationally, phosphorylated on Tyr residues after T-cell receptor triggering by LCK in association with CD4/CD8.

It localises to the cell membrane. In terms of biological role, part of the TCR-CD3 complex present on T-lymphocyte cell surface that plays an essential role in adaptive immune response. When antigen presenting cells (APCs) activate T-cell receptor (TCR), TCR-mediated signals are transmitted across the cell membrane by the CD3 chains CD3D, CD3E, CD3G and CD3Z. All CD3 chains contain immunoreceptor tyrosine-based activation motifs (ITAMs) in their cytoplasmic domain. Upon TCR engagement, these motifs become phosphorylated by Src family protein tyrosine kinases LCK and FYN, resulting in the activation of downstream signaling pathways. In addition to this role of signal transduction in T-cell activation, CD3G plays an essential role in the dynamic regulation of TCR expression at the cell surface. Indeed, constitutive TCR cycling is dependent on the di-leucine-based (diL) receptor-sorting motif present in CD3G. This chain is T-cell surface glycoprotein CD3 gamma chain (CD3G), found in Bos taurus (Bovine).